A 118-amino-acid polypeptide reads, in one-letter code: Lutropin subunit beta (118 aa).

Intrachain disulfides connect C9–C57, C23–C72, C26–C110, C34–C88, C38–C90, and C93–C100. N13 carries an N-linked (GlcNAc...) asparagine glycan.

Belongs to the glycoprotein hormones subunit beta family. As to quaternary structure, heterodimer of a common alpha chain and a unique beta chain which confers biological specificity to thyrotropin, lutropin, follitropin and gonadotropin.

Its subcellular location is the secreted. In terms of biological role, promotes spermatogenesis and ovulation by stimulating the testes and ovaries to synthesize steroids. This is Lutropin subunit beta (LHB) from Balaenoptera acutorostrata (Common minke whale).